Here is a 285-residue protein sequence, read N- to C-terminus: Nucleotide-binding protein PFL_0912 (285 aa).

An ATP-binding site is contributed by 8 to 15; that stretch reads GRSGSGKS. A GTP-binding site is contributed by 60-63; that stretch reads DARN.

It belongs to the RapZ-like family.

Displays ATPase and GTPase activities. In Pseudomonas fluorescens (strain ATCC BAA-477 / NRRL B-23932 / Pf-5), this protein is Nucleotide-binding protein PFL_0912.